Reading from the N-terminus, the 269-residue chain is tRNA uridine(34) hydroxylase (269 aa).

Positions 122–216 (QDPEVVLIDV…YLEAIAPEEN (95 aa)) constitute a Rhodanese domain. The active-site Cysteine persulfide intermediate is the cysteine 176.

This sequence belongs to the TrhO family.

The enzyme catalyses uridine(34) in tRNA + AH2 + O2 = 5-hydroxyuridine(34) in tRNA + A + H2O. Catalyzes oxygen-dependent 5-hydroxyuridine (ho5U) modification at position 34 in tRNAs. The polypeptide is tRNA uridine(34) hydroxylase (Synechococcus elongatus (strain ATCC 33912 / PCC 7942 / FACHB-805) (Anacystis nidulans R2)).